Here is a 239-residue protein sequence, read N- to C-terminus: 2-C-methyl-D-erythritol 4-phosphate cytidylyltransferase (239 aa).

This sequence belongs to the IspD/TarI cytidylyltransferase family. IspD subfamily.

It carries out the reaction 2-C-methyl-D-erythritol 4-phosphate + CTP + H(+) = 4-CDP-2-C-methyl-D-erythritol + diphosphate. It functions in the pathway isoprenoid biosynthesis; isopentenyl diphosphate biosynthesis via DXP pathway; isopentenyl diphosphate from 1-deoxy-D-xylulose 5-phosphate: step 2/6. Functionally, catalyzes the formation of 4-diphosphocytidyl-2-C-methyl-D-erythritol from CTP and 2-C-methyl-D-erythritol 4-phosphate (MEP). The sequence is that of 2-C-methyl-D-erythritol 4-phosphate cytidylyltransferase from Ruthia magnifica subsp. Calyptogena magnifica.